Consider the following 270-residue polypeptide: Interleukin-1 alpha (270 aa).

The propeptide occupies 1–114 (MAKVPDLFED…HDLEETIQPR (114 aa)). A glycan (N-linked (GlcNAc...) asparagine) is linked at N64. N6-acetyllysine is present on K85. The nuclear localization signal (NLS) stretch occupies residues 85 to 89 (KKRRL). S90 is subject to Phosphoserine. N139 and N143 each carry an N-linked (GlcNAc...) asparagine glycan.

This sequence belongs to the IL-1 family. In terms of assembly, monomer. Interacts with TMED10; the interaction mediates the translocation from the cytoplasm into the ERGIC (endoplasmic reticulum-Golgi intermediate compartment) and thereby secretion. Interacts with IL1R1. Interacts with S100A13; this interaction is the first step in the export of IL1A, followed by direct translocation of this complex across the plasma membrane. Post-translationally, acetylated within its nuclear localization sequence, which impacts subcellular localization. In terms of processing, proteolytic processed by CAPN1 in a calcium-dependent manner. Cleavage from 31 kDa precursor to 18 kDa biologically active molecules. Phosphorylated. Phosphorylation greatly enhances susceptibility to digestion and promotes the conversion of pre-IL1A alpha to the biologically active IL1A.

The protein resides in the nucleus. Its subcellular location is the cytoplasm. The protein localises to the secreted. Functionally, cytokine constitutively present intracellularly in nearly all resting non-hematopoietic cells that plays an important role in inflammation and bridges the innate and adaptive immune systems. After binding to its receptor IL1R1 together with its accessory protein IL1RAP, forms the high affinity interleukin-1 receptor complex. Signaling involves the recruitment of adapter molecules such as MYD88, IRAK1 or IRAK4. In turn, mediates the activation of NF-kappa-B and the three MAPK pathways p38, p42/p44 and JNK pathways. Within the cell, acts as an alarmin and cell death results in its liberation in the extracellular space after disruption of the cell membrane to induce inflammation and alert the host to injury or damage. In addition to its role as a danger signal, which occurs when the cytokine is passively released by cell necrosis, directly senses DNA damage and acts as a signal for genotoxic stress without loss of cell integrity. The chain is Interleukin-1 alpha from Mus musculus (Mouse).